The following is a 30-amino-acid chain: Cyclotide hyen-G (30 aa).

Positions 1 to 30 (GLPCGESCVYIPCISTVLGCSCSNKVCYRD) form a cross-link, cyclopeptide (Gly-Asp). Disulfide bonds link C4–C20, C8–C22, and C13–C27.

This is a cyclic peptide. As to expression, detected in stems (at protein level).

Probably participates in a plant defense mechanism. This Pigea enneasperma (Spade flower) protein is Cyclotide hyen-G.